An 87-amino-acid chain; its full sequence is MEERRKEKGKEGRRGKATGHSVDKFSRSNLPEMEKRKLHLPPGTALFVFVNNTLPQTAQLMGSVYESYKDEGDGFLYLCYSSEKTFG.

Basic and acidic residues predominate over residues 1–14 (MEERRKEKGKEGRR). Residues 1–30 (MEERRKEKGKEGRRGKATGHSVDKFSRSNL) form a disordered region. A lipid anchor (Phosphatidylethanolamine amidated glycine) is attached at glycine 87.

This sequence belongs to the ATG8 family. Interacts with ATG4. Post-translationally, the C-terminal Gly is amidated with phosphatidylethanolamine by an activating system similar to that for ubiquitin.

The protein resides in the cytoplasmic vesicle. It localises to the autophagosome membrane. Its subcellular location is the vacuole membrane. It is found in the cytoplasm. The protein localises to the cytoskeleton. Ubiquitin-like modifier involved in autophagosomes formation. May mediate the delivery of the autophagosomes to the vacuole via the microtubule cytoskeleton. This is Putative autophagy-related protein 8E (ATG8E) from Oryza sativa subsp. japonica (Rice).